Consider the following 232-residue polypeptide: Large ribosomal subunit protein uL1 (232 aa).

It belongs to the universal ribosomal protein uL1 family. In terms of assembly, part of the 50S ribosomal subunit.

In terms of biological role, binds directly to 23S rRNA. The L1 stalk is quite mobile in the ribosome, and is involved in E site tRNA release. Protein L1 is also a translational repressor protein, it controls the translation of the L11 operon by binding to its mRNA. The sequence is that of Large ribosomal subunit protein uL1 from Burkholderia mallei (strain NCTC 10247).